The chain runs to 130 residues: MSGRGKQGGKARAKAKSRSSRAGLQFPVGRVHRLLRKGNYSERVGAGAPVYLAAVLEYLTAEILELAGNAARDNKKTRIIPRHLQLAIRNDEELNKLLGRVTIAQGGVLPNIQAVLLPKKTESHHKAKGK.

Positions 1 to 22 (MSGRGKQGGKARAKAKSRSSRA) are disordered. An N-acetylserine modification is found at Ser2. Ser2 is subject to Phosphoserine; by RPS6KA5. The residue at position 4 (Arg4) is a Citrulline; alternate. A Symmetric dimethylarginine; by PRMT5; alternate modification is found at Arg4. Lys6 is subject to N6-(2-hydroxyisobutyryl)lysine. Positions 7 to 19 (QGGKARAKAKSRS) are enriched in basic residues. The residue at position 10 (Lys10) is an N6-(2-hydroxyisobutyryl)lysine; alternate. N6-(beta-hydroxybutyryl)lysine; alternate occurs at positions 10 and 14. Lys10 bears the N6-lactoyllysine; alternate mark. Position 10 is an N6-succinyllysine; alternate (Lys10). Residue Lys14 forms a Glycyl lysine isopeptide (Lys-Gly) (interchain with G-Cter in ubiquitin); alternate linkage. Lys16 is covalently cross-linked (Glycyl lysine isopeptide (Lys-Gly) (interchain with G-Cter in ubiquitin)). An N6-(2-hydroxyisobutyryl)lysine; alternate modification is found at Lys37. Lys37 is subject to N6-(beta-hydroxybutyryl)lysine; alternate. An N6-crotonyllysine; alternate modification is found at Lys37. 2 positions are modified to N6-(2-hydroxyisobutyryl)lysine: Lys75 and Lys76. An N6-(2-hydroxyisobutyryl)lysine; alternate modification is found at Lys96. Residue Lys96 is modified to N6-(beta-hydroxybutyryl)lysine; alternate. Lys96 carries the post-translational modification N6-succinyllysine; alternate. At Lys96 the chain carries N6-glutaryllysine; alternate. Residue Gln105 is modified to N5-methylglutamine. Position 119 is an N6-(2-hydroxyisobutyryl)lysine; alternate (Lys119). Lys119 is subject to N6-(beta-hydroxybutyryl)lysine; alternate. Lys119 and Lys120 each carry N6-crotonyllysine; alternate. Lys119 and Lys120 each carry N6-glutaryllysine; alternate. A Glycyl lysine isopeptide (Lys-Gly) (interchain with G-Cter in ubiquitin); alternate cross-link involves residue Lys120. Residue Thr121 is modified to Phosphothreonine; by DCAF1. Residue Lys126 is modified to N6-crotonyllysine; alternate. N6-glutaryllysine; alternate is present on Lys126.

Belongs to the histone H2A family. As to quaternary structure, the nucleosome is a histone octamer containing two molecules each of H2A, H2B, H3 and H4 assembled in one H3-H4 heterotetramer and two H2A-H2B heterodimers. The octamer wraps approximately 147 bp of DNA. Deiminated on Arg-4 in granulocytes upon calcium entry. In terms of processing, monoubiquitination of Lys-120 (H2AK119Ub) by RING1, TRIM37 and RNF2/RING2 complex gives a specific tag for epigenetic transcriptional repression and participates in X chromosome inactivation of female mammals. It is involved in the initiation of both imprinted and random X inactivation. Ubiquitinated H2A is enriched in inactive X chromosome chromatin. Ubiquitination of H2A functions downstream of methylation of 'Lys-27' of histone H3 (H3K27me). H2AK119Ub by RNF2/RING2 can also be induced by ultraviolet and may be involved in DNA repair. Monoubiquitination of Lys-120 (H2AK119Ub) by TRIM37 may promote transformation of cells in a number of breast cancers. Following DNA double-strand breaks (DSBs), it is ubiquitinated through 'Lys-63' linkage of ubiquitin moieties by the E2 ligase UBE2N and the E3 ligases RNF8 and RNF168, leading to the recruitment of repair proteins to sites of DNA damage. Ubiquitination at Lys-14 and Lys-16 (H2AK13Ub and H2AK15Ub, respectively) in response to DNA damage is initiated by RNF168 that mediates monoubiquitination at these 2 sites, and 'Lys-63'-linked ubiquitin are then conjugated to monoubiquitin; RNF8 is able to extend 'Lys-63'-linked ubiquitin chains in vitro. Deubiquitinated by USP51 at Lys-14 and Lys-16 (H2AK13Ub and H2AK15Ub, respectively) after damaged DNA is repaired. H2AK119Ub and ionizing radiation-induced 'Lys-63'-linked ubiquitination (H2AK13Ub and H2AK15Ub) are distinct events. Post-translationally, phosphorylation on Ser-2 (H2AS1ph) is enhanced during mitosis. Phosphorylation on Ser-2 by RPS6KA5/MSK1 directly represses transcription. Acetylation of H3 inhibits Ser-2 phosphorylation by RPS6KA5/MSK1. Phosphorylation at Thr-121 (H2AT120ph) by DCAF1 is present in the regulatory region of many tumor suppresor genes and down-regulates their transcription. Glutamine methylation at Gln-105 (H2AQ104me) by FBL is specifically dedicated to polymerase I. It is present at 35S ribosomal DNA locus and impairs binding of the FACT complex. In terms of processing, symmetric dimethylation on Arg-4 by the PRDM1/PRMT5 complex may play a crucial role in the germ-cell lineage. Post-translationally, crotonylation (Kcr) is specifically present in male germ cells and marks testis-specific genes in post-meiotic cells, including X-linked genes that escape sex chromosome inactivation in haploid cells. Crotonylation marks active promoters and enhancers and confers resistance to transcriptional repressors. It is also associated with post-meiotically activated genes on autosomes. Lactylated in macrophages by EP300/P300 by using lactoyl-CoA directly derived from endogenous or exogenous lactate, leading to stimulates gene transcription.

The protein resides in the nucleus. It is found in the chromosome. Its function is as follows. Core component of nucleosome. Nucleosomes wrap and compact DNA into chromatin, limiting DNA accessibility to the cellular machineries which require DNA as a template. Histones thereby play a central role in transcription regulation, DNA repair, DNA replication and chromosomal stability. DNA accessibility is regulated via a complex set of post-translational modifications of histones, also called histone code, and nucleosome remodeling. This is Histone H2A type 3 from Homo sapiens (Human).